A 371-amino-acid chain; its full sequence is uncharacterized protein (371 aa).

The next 8 membrane-spanning stretches (helical) occupy residues 4–24, 60–82, 87–109, 130–150, 197–217, 224–244, 282–302, and 320–340; these read LPML…FIYG, LIQL…ALYG, LWIV…MLSI, VFIN…FVAS, VVAV…LLPV, IYPL…YGLV, VPIW…GFHA, and FIFY…CMVG.

Belongs to the peptide transporter carbon starvation (CstA) (TC 2.A.114) family.

Its subcellular location is the cell membrane. This is an uncharacterized protein from Haemophilus influenzae (strain ATCC 51907 / DSM 11121 / KW20 / Rd).